Here is a 62-residue protein sequence, read N- to C-terminus: DNA gyrase inhibitor YacG (62 aa).

4 residues coordinate Zn(2+): cysteine 9, cysteine 12, cysteine 27, and cysteine 31. Over residues glycine 43 to glutamate 53 the composition is skewed to basic and acidic residues. The tract at residues glycine 43 to glutamate 62 is disordered.

Belongs to the DNA gyrase inhibitor YacG family. Interacts with GyrB. Requires Zn(2+) as cofactor.

Functionally, inhibits all the catalytic activities of DNA gyrase by preventing its interaction with DNA. Acts by binding directly to the C-terminal domain of GyrB, which probably disrupts DNA binding by the gyrase. This chain is DNA gyrase inhibitor YacG, found in Citrifermentans bemidjiense (strain ATCC BAA-1014 / DSM 16622 / JCM 12645 / Bem) (Geobacter bemidjiensis).